A 285-amino-acid chain; its full sequence is MLNHTERAEVLVHALPYIQRYRGKIIVVKYGGNAMISNELRETVINDIILMKCVGIEPIVVHGGGPDISDLLNRLNHKSEFINGLRYTDDITIEVVQMVLGGKVNKNLVSLIEKFGGKAIGLCGMDGSLLKAKKIESDNDLGYVGEITKVNTEILKTTISSGYIPVVGSVALGEDDNKAYNINADTCAAKIASALKAERLILLTDVPGVMKDPKDISTLISTLRLHQIPKLCLEGIIKGGMIPKIDCCVEAIRMGVEKATILDGRVPHSILLELFSNEGIGTMIY.

Residues Gly-64–Gly-65, Arg-86, and Asn-181 contribute to the substrate site.

The protein belongs to the acetylglutamate kinase family. ArgB subfamily.

The protein resides in the cytoplasm. It catalyses the reaction N-acetyl-L-glutamate + ATP = N-acetyl-L-glutamyl 5-phosphate + ADP. Its pathway is amino-acid biosynthesis; L-arginine biosynthesis; N(2)-acetyl-L-ornithine from L-glutamate: step 2/4. Catalyzes the ATP-dependent phosphorylation of N-acetyl-L-glutamate. This is Acetylglutamate kinase from Clostridium beijerinckii (strain ATCC 51743 / NCIMB 8052) (Clostridium acetobutylicum).